Consider the following 343-residue polypeptide: Aspartate-semialdehyde dehydrogenase (343 aa).

11–14 (TGMV) is an NADP(+) binding site. Arg109 contacts phosphate. Cys148 functions as the Acyl-thioester intermediate in the catalytic mechanism. Gln174 serves as a coordination point for substrate. 177–178 (SG) contacts NADP(+). Glu200 provides a ligand contact to substrate. A phosphate-binding site is contributed by Lys203. A substrate-binding site is contributed by Arg233. The Proton acceptor role is filled by His240. 321-322 (NT) lines the NADP(+) pocket.

This sequence belongs to the aspartate-semialdehyde dehydrogenase family. As to quaternary structure, homodimer.

The enzyme catalyses L-aspartate 4-semialdehyde + phosphate + NADP(+) = 4-phospho-L-aspartate + NADPH + H(+). The protein operates within amino-acid biosynthesis; L-lysine biosynthesis via DAP pathway; (S)-tetrahydrodipicolinate from L-aspartate: step 2/4. It functions in the pathway amino-acid biosynthesis; L-methionine biosynthesis via de novo pathway; L-homoserine from L-aspartate: step 2/3. It participates in amino-acid biosynthesis; L-threonine biosynthesis; L-threonine from L-aspartate: step 2/5. Catalyzes the NADPH-dependent formation of L-aspartate-semialdehyde (L-ASA) by the reductive dephosphorylation of L-aspartyl-4-phosphate. In Archaeoglobus fulgidus (strain ATCC 49558 / DSM 4304 / JCM 9628 / NBRC 100126 / VC-16), this protein is Aspartate-semialdehyde dehydrogenase.